Consider the following 252-residue polypeptide: Small ribosomal subunit protein uS2 (252 aa).

It belongs to the universal ribosomal protein uS2 family.

The chain is Small ribosomal subunit protein uS2 from Ruminiclostridium cellulolyticum (strain ATCC 35319 / DSM 5812 / JCM 6584 / H10) (Clostridium cellulolyticum).